The chain runs to 394 residues: Elongation factor Tu (394 aa).

The tr-type G domain maps to 10–204 (KPHVNIGTIG…AVDSYIPQPV (195 aa)). A G1 region spans residues 19 to 26 (GHVDHGKT). Residue 19–26 (GHVDHGKT) coordinates GTP. Thr-26 contributes to the Mg(2+) binding site. The segment at 60-64 (GITIS) is G2. The G3 stretch occupies residues 81–84 (DCPG). Residues 81–85 (DCPGH) and 136–139 (NKID) contribute to the GTP site. Residues 136–139 (NKID) are G4. Residues 174-176 (SAL) form a G5 region.

Belongs to the TRAFAC class translation factor GTPase superfamily. Classic translation factor GTPase family. EF-Tu/EF-1A subfamily. In terms of assembly, monomer.

The protein localises to the cytoplasm. It carries out the reaction GTP + H2O = GDP + phosphate + H(+). Functionally, GTP hydrolase that promotes the GTP-dependent binding of aminoacyl-tRNA to the A-site of ribosomes during protein biosynthesis. In Rickettsia rickettsii, this protein is Elongation factor Tu.